A 429-amino-acid chain; its full sequence is Probable M18 family aminopeptidase 2 (429 aa).

Zn(2+) is bound by residues histidine 82, histidine 156, and histidine 401.

The protein belongs to the peptidase M18 family. The cofactor is Zn(2+).

This chain is Probable M18 family aminopeptidase 2, found in Stutzerimonas stutzeri (strain A1501) (Pseudomonas stutzeri).